A 116-amino-acid chain; its full sequence is Large ribosomal subunit protein P2 (116 aa).

Residues 60-116 form a disordered region; it reads GKLSSMPSGGGVAAAAGGGGAAAGGGGAAPAAEEKKEEKKEESEEESDDDMGFGLFD. Gly residues predominate over residues 67–87; sequence SGGGVAAAAGGGGAAAGGGGA. The span at 91 to 101 shows a compositional bias: basic and acidic residues; that stretch reads AEEKKEEKKEE.

It belongs to the eukaryotic ribosomal protein P1/P2 family. In terms of assembly, P1 and P2 exist as dimers at the large ribosomal subunit. Phosphorylated.

Plays an important role in the elongation step of protein synthesis. This Branchiostoma floridae (Florida lancelet) protein is Large ribosomal subunit protein P2.